Consider the following 398-residue polypeptide: Cytochrome b (398 aa).

A run of 4 helical transmembrane segments spans residues 33-53 (FGSLLGLCLVAQIITGLFLAM), 77-98 (WLIRNLHANGASFFFICVYLHI), 113-133 (WNIGVILLLLVMMTAFVGYVL), and 178-198 (FFAFHFLFPFLIAAFTIIHLL). Positions 83 and 97 each coordinate heme b. Heme b is bound by residues histidine 182 and histidine 196. Histidine 201 provides a ligand contact to a ubiquinone. The next 4 membrane-spanning stretches (helical) occupy residues 226–246 (YKDLLGFAILLIALISLSLFA), 288–308 (LGGVLALLASILILMLVPILH), 320–340 (FTQLLFWLLVADVIILTWIGG), and 347–367 (YVVIGQIASFLYFFLFLFLIP).

It belongs to the cytochrome b family. In terms of assembly, the cytochrome bc1 complex contains 3 respiratory subunits (MT-CYB, CYC1 and UQCRFS1), 2 core proteins (UQCRC1 and UQCRC2) and probably 6 low-molecular weight proteins. The cofactor is heme b.

The protein resides in the mitochondrion inner membrane. Its function is as follows. Component of the ubiquinol-cytochrome c reductase complex (complex III or cytochrome b-c1 complex) that is part of the mitochondrial respiratory chain. The b-c1 complex mediates electron transfer from ubiquinol to cytochrome c. Contributes to the generation of a proton gradient across the mitochondrial membrane that is then used for ATP synthesis. This Channa asiatica (Small snakehead) protein is Cytochrome b (mt-cyb).